The chain runs to 362 residues: D-alanine--D-alanine ligase (362 aa).

The 212-residue stretch at 134-345 (KILAQRAGVP…YPDLITRLIR (212 aa)) folds into the ATP-grasp domain. An ATP-binding site is contributed by 170–225 (GQLGTSNLFVKPSNQGSSVGITHVTDDSNYAEALAEAFKYDDKVLVEEGIVGTEVE). Mg(2+) is bound by residues D298, E312, and N314.

The protein belongs to the D-alanine--D-alanine ligase family. Mg(2+) serves as cofactor. Requires Mn(2+) as cofactor.

Its subcellular location is the cytoplasm. It carries out the reaction 2 D-alanine + ATP = D-alanyl-D-alanine + ADP + phosphate + H(+). It participates in cell wall biogenesis; peptidoglycan biosynthesis. Its function is as follows. Cell wall formation. In Lactobacillus delbrueckii subsp. bulgaricus (strain ATCC BAA-365 / Lb-18), this protein is D-alanine--D-alanine ligase.